The primary structure comprises 228 residues: ATP synthase subunit a (228 aa).

The next 6 helical transmembrane spans lie at 14–34, 71–91, 101–121, 139–159, 165–185, and 188–208; these read YFLLMPMTLASMLMAISWLFF, WVPIITTVFILLFSVNVLGLL, ISLTYSIGIPIWMSVNILGFY, FLLPLMVIIETLSLFAQPIAL, ANLTAGHLLIYLMSTAIWVLM, and VAIASITLIIFILLFLLEIGV.

This sequence belongs to the ATPase A chain family. As to quaternary structure, F-type ATPases have 2 components, CF(1) - the catalytic core - and CF(0) - the membrane proton channel. CF(1) has five subunits: alpha(3), beta(3), gamma(1), delta(1), epsilon(1). CF(0) has three main subunits: a, b and c.

It is found in the mitochondrion inner membrane. Mitochondrial membrane ATP synthase (F(1)F(0) ATP synthase or Complex V) produces ATP from ADP in the presence of a proton gradient across the membrane which is generated by electron transport complexes of the respiratory chain. F-type ATPases consist of two structural domains, F(1) - containing the extramembraneous catalytic core and F(0) - containing the membrane proton channel, linked together by a central stalk and a peripheral stalk. During catalysis, ATP synthesis in the catalytic domain of F(1) is coupled via a rotary mechanism of the central stalk subunits to proton translocation. Key component of the proton channel; it may play a direct role in the translocation of protons across the membrane. In Pisaster ochraceus (Ochre sea star), this protein is ATP synthase subunit a (ATP6).